Reading from the N-terminus, the 554-residue chain is Arginine--tRNA ligase (554 aa).

The 'HIGH' region signature appears at 132 to 142; that stretch reads ANPTGPLHIGH.

Belongs to the class-I aminoacyl-tRNA synthetase family. Monomer.

The protein localises to the cytoplasm. The catalysed reaction is tRNA(Arg) + L-arginine + ATP = L-arginyl-tRNA(Arg) + AMP + diphosphate. This Pseudarthrobacter chlorophenolicus (strain ATCC 700700 / DSM 12829 / CIP 107037 / JCM 12360 / KCTC 9906 / NCIMB 13794 / A6) (Arthrobacter chlorophenolicus) protein is Arginine--tRNA ligase.